Reading from the N-terminus, the 2620-residue chain is MPFLNGNTTHHEAHSAEPDHGNTEPMVIIGLAMRAADEATDAEAFWDFLFYVKGAAFLEESPNGFDAAFFKMSKTEVQSLDPQQRILMENVYHALENAGLPMEDVISSNTSVFVSGFNYHHADRLNSDLELSFKHRPTGAENSMISGRVSWFYDFQGASLTIDTACSSSLVGLHLARQSLQAKESDMAIVSGVSVIGYLSHLMKMSYSGLLGSEGKSLAFDQRADGYGLGEGVGTVILKTLSAAIRDGDTIRAVVRGTGLNHDGHTPGMTYPSAAAQESLIRKTYVAAGLDPKDTIYAESHGTGTQAGDLMECTAIAAAFETEKRDRPFYIGAVKPNVGHLEGGAGITSVIKSVLLLESGIIPPNATLKKINPKIRPEWNLQFPTRCVPWPTTGIRRSSISSYGISGTNAHCILDDAYHYCNQRGISVRHRTAETVPSEKEIELIVAKAVRRYQTNSANGFNKFDEPRGSDSAGSNANGSHGVAGTVGANGNGVNGINPSPGHMPENTKALQASSLLLFSAFDEKSLEKVLAQIRNYISSLDSNSAGQALHDLAFTLSTRRSRLPWKTYALCSSLVELHDMLSKPHLKAIKSRSPLRVGFVFTGQGAQYAQMGQQLLLYPVFRQSLEEASLYFKSLGCDWSLLEELTRDSKDSRISKSAFAHPLSCAVQIALLDLLLSWNVVPHRVVGHSSGEIAAAYCAGKISREGAWRVAYYRGHVLLHGKTDRVGGMLAAGIEEEPLLDLLSQVHAALPGGTLSIACYNSPRNHTISGDDAMVDALKVLLDEQGIFTRKLKVEHAAHSAHMEQFTGEYEELVGDLPSNRLLHFDHTVHMFSTLTGRLIDDSCVPEKSSHWSNSMVGPVEFTKAVSSMCFDSILGDGSSVQGSQVDVILEVGPHPAMQSAVKDILGLGSGIPYLATLSRKDTGLGTLLDTIGSLAAHGAPVDLDKVNRSANPLLKPRMLADLPPYPFSHEEQGLYESRLIKNIRLRQFPRHDLFGAPVPDWNPNSPRWRHFLRVSENPWLKEHVIGDEFVFPGAGYMVMAVEGMKQITDPAEMVGIFLRDVKFKAMLVVPDDTQGVEVCLSFYPVPESRTSLSTAWKRFEVASYNQKTEEWIEHCTGEVSPDLKKSLNPIDGTRTQEAEKAQFSAFAQSRQDVCTAPVDFTPVYDHLRKIGVNHGPSFRNLAAVNIGDREQGLMTGDIVVPDITQVMPEKYAHGHLIHPTTLDNAFHASFASIYDLEGKTMMRRGCVPSYVQDVWLSATALSSDPGTILRCTSEASHALHGAFESTVHAWDPANPSERLISLAGIRLSPFKPESSESIAAENRTCYSVEWYPDLNLLTKREFQKLLSRFPAPLETFDAQQKWFSQLQLASTLLATDGLRESREMKDVNLEDHQRGYRELLRAIAAGVTTQSIPYVSLDMWLEYSRNSDLKEQLYREIEDQSPDGALLVRMGAAIPSILGREITAQYLLYEQDDLLSVWDENRLSRGKILPALTQYLTLLRKSQRGLRVLELGSRTGVLAEHVLKTLCVDGTENSIEQYTIRSQSADHCEKLKKRLSAWVDIIRYEALDLTAKSSEQEIQINPFDLVIVNNFVRGQPNMEEMMLRLNSLMRQGGRLLILEDVRSESLHANIIFGALPGWREATKASWDAESGTDKLEWDRVLRNTGFSGVDFEASSSIYPDFADFSLVASTASHGMLEATPPSFEVLVIIQSHSEISRSLARGLLTAGVSHSICLIDDIRADNVIGRVCISLLEAEQPILNSMDETTFQAIQNLVTACDSLLWVTGDPLAHPEFQMATGLIRTIRWELDRNDLNLITIALDGESTASTDMNVDALIRVLRYQFLDQCSKDSGNTNSEYRIRDSVIETNHAVKNTVASAVIEAQFSSPKPTLSTWESIERPVRLINTSPGIDSLTWVTDEDISRKPLAVNEIEIDVHAVGLNFKDLLVAMGEIDQPGFGHEAAGIVVRVGSSVSTFKAGDRVMYLGDPSPGKMGTLRTRSRVHCGLAIKIPDTMGFEIAAGLPIIYGTVIYSLGHIARLRAGEKVLIHAAAGGIGQAAIQYAHAKGAEIFVTLSSLEKKQYIMENFHIRPDHIFSSRDLNFAAGIKRIAPAGVDVVLNSLSGEALRQSWQCVAPFGRFVEIGKLDLQAGSKLDMTPFLYNVSFSGVDLNALAENRPEVCQELLQETIDLWSNQDIHEARPTQVLDYGQLKEGLRLLQTGKSIGKVTLVPGTHPVSVIPPPFLPLELDANASFILAGGLGGIGRSIALRLARRGAKHIVFLSRSATVHEAGQETIAKLKLLGCTSHVFQCDISNETRLLEVITRVRETLPPIKGCIQCSFVLKDKAFDSMTHEEWQTALTPKVSGSWNLHCLLPDVDFFLLLSSITGIVGNRSQANYNAGNNFQDSLARYRVSKGMHGASVNLGAVVGIGFIAENAEYAAKHTFKMANPQTEEEVLATVEYLIDRRHHMALSPDTAQLICGLRTPASYSLSNEAPPTHLKYPMFAQLPPALSNTGPGGSHSAQSATHIRDQLQSATAPEEAARIIHKALRRKMADLLNISEDTIDDSLNVRANGVDSLIEMEFRTWFAKELGATVPLKDLAKDLTQLSARLVSLSSFTKFR.

Residues M1 to N22 form a disordered region. Residues M1–D416 form the Ketosynthase family 3 (KS3) domain. The span at T9–N22 shows a compositional bias: basic and acidic residues. Catalysis depends on for beta-ketoacyl synthase activity residues C166, H301, and H340. The interval G460 to H481 is disordered. Low complexity predominate over residues S470 to H481. The segment at V601 to D923 is malonyl-CoA:ACP transacylase (MAT) domain. Positions H993 to S1128 are N-terminal hotdog fold. The segment at H993–K1313 is dehydratase (DH) domain. The 326-residue stretch at H993–E1318 folds into the PKS/mFAS DH domain. H1025 (proton acceptor; for dehydratase activity) is an active-site residue. The interval T1157–E1318 is C-terminal hotdog fold. D1225 acts as the Proton donor; for dehydratase activity in catalysis. The interval G1379–Y1680 is methyltransferase (CMet) domain. The segment at G1910 to L2227 is enoyl reductase (ER) domain. A ketoreductase (KR) domain region spans residues S2251–V2425. One can recognise a Carrier domain in the interval E2539–R2620. At S2576 the chain carries O-(pantetheine 4'-phosphoryl)serine.

The protein operates within secondary metabolite biosynthesis. In terms of biological role, highly reducing polyketide synthase; part of the gene cluster that mediates the biosynthesis of azaterrilone A and other azaphilones, a class of fungal metabolites characterized by a highly oxygenated pyrano-quinone bicyclic core and exhibiting a broad range of bioactivities. The first step of the pathway begins with the non-reducing polyketide synthase tazA that assembles one acetyl-CoA starter unit, five malonyl-CoA units, and catalyzes a series of Claisen condensations, methylation, PT-mediated cyclization, and finally releases the first hexaketide precursor through the R-domain. The tazA product then undergoes reduction on its terminal ketone and the following pyran-ring formation by yet undetermined enzyme(s). Dehydration and enoyl reduction, possibly involving the trans-enoyl reductase tazE leads to the next intermediate. TazD is predicted as an acetyltransferase and might catalyze the acetylation steps leading to the synthesis of azaterrilone A. Azaterrilone A is not the final product of the taz pathway and both the highly reducing polyketide synthase tazB and the dual enzyme tazHJ catalyze late steps of the pathway, leading to the production of the 2 final stereoisomers that contain additional polyketide modification whose structures have still to be determined. The protein is Highly reducing polyketide synthase tazB of Aspergillus terreus (strain NIH 2624 / FGSC A1156).